The primary structure comprises 411 residues: Arginine deiminase (411 aa).

Catalysis depends on C401, which acts as the Amidino-cysteine intermediate.

The protein belongs to the arginine deiminase family.

The protein resides in the cytoplasm. The catalysed reaction is L-arginine + H2O = L-citrulline + NH4(+). The protein operates within amino-acid degradation; L-arginine degradation via ADI pathway; carbamoyl phosphate from L-arginine: step 1/2. The protein is Arginine deiminase of Staphylococcus haemolyticus (strain JCSC1435).